A 271-amino-acid polypeptide reads, in one-letter code: Membrane protein insertase YidC 1 (271 aa).

A signal peptide spans 1 to 20; that stretch reads MKKKLKTFSLILLTGSLLVA. Cysteine 21 is lipidated: N-palmitoyl cysteine. A lipid anchor (S-diacylglycerol cysteine) is attached at cysteine 21. 4 helical membrane passes run 45 to 65, 124 to 144, 163 to 183, and 201 to 221; these read IQWL…TLII, YASV…FQAL, PDPY…STWL, and VMPF…VLYW.

It belongs to the OXA1/ALB3/YidC family. Type 2 subfamily.

It localises to the cell membrane. In terms of biological role, required for the insertion and/or proper folding and/or complex formation of integral membrane proteins into the membrane. Involved in integration of membrane proteins that insert both dependently and independently of the Sec translocase complex, as well as at least some lipoproteins. The protein is Membrane protein insertase YidC 1 of Streptococcus agalactiae serotype III (strain NEM316).